Here is a 721-residue protein sequence, read N- to C-terminus: Vacuolar transporter chaperone complex subunit 4 (721 aa).

The region spanning 1 to 146 is the SPX domain; sequence MKFGQLLKET…GWILKPVFAA (146 aa). Residues 1–631 lie on the Cytoplasmic side of the membrane; the sequence is MKFGQLLKET…KTYFALERTY (631 aa). ATP contacts are provided by Lys198, Arg262, Arg264, Lys279, Lys292, Tyr357, and Arg359. Glu421 contacts Mn(2+). Lys453 is an active-site residue. Polar residues-rich tracts occupy residues 490-513 and 529-547; these read QGRS…SENT and IGSS…SDSF. Residues 490–547 form a disordered region; the sequence is QGRSQSGTHSSSVSANVLTDSENTPIHADGDNYVDEESRIGSSSTRNDNSTFQTSDSF. Ser495 carries the phosphoserine modification. Thr497 is subject to Phosphothreonine. Ser501 is modified (phosphoserine). Residue Thr534 is modified to Phosphothreonine. Phosphoserine is present on Ser546. A helical transmembrane segment spans residues 632–652; sequence LDYLRYSILMGSIGITLFSFA. Residues 653 to 657 are Vacuolar-facing; sequence KTRSG. A helical membrane pass occupies residues 658 to 678; sequence ILGAASFTLVALFAIFYSTFL. The Cytoplasmic segment spans residues 679–697; the sequence is YLWRAVNIAKHNAVRYDDR. Residues 698-718 traverse the membrane as a helical segment; sequence FGPTAICVITFAAISANVILN. At 719–721 the chain is on the vacuolar side; it reads FNA.

The protein belongs to the VTC4 family. The VTC core complex is an integral membrane heterooligomer composed of at least the catalytic subunit vtc4 and the accessory subunits vtc1 and vtc2. vtc1 is a small membrane protein without hydrophilic domain. Vtc2 and vtc4 are related and have 2 hydrophilic domains that face the cytosol, an N-terminal SPX domain and the central core domain. The central core in vtc4 is the catalytic domain. Requires Mn(2+) as cofactor.

It is found in the vacuole membrane. The catalysed reaction is [phosphate](n) + ATP = [phosphate](n+1) + ADP. Activity of the enzyme is Mn(2+)-dependent and enhanced in the presence of pyrophosphate (PPi). Its function is as follows. Catalytic subunit of the vacuolar transporter chaperone (VTC) complex. The VTC complex acts as a vacuolar polyphosphate polymerase that catalyzes the synthesis of inorganic polyphosphate (polyP) via transfer of phosphate from ATP to a growing polyP chain, releasing ADP. VTC exposes its catalytic domain vtc4 to the cytosol, where the growing polyP chain winds through a tunnel-shaped pocket, integrating cytoplasmic polymer synthesis with polyP membrane translocation. The VTC complex carries 9 vacuolar transmembrane domains, which are likely to constitute the translocation channel into the organelle lumen. PolyP synthesis is tightly coupled to its transport into the vacuole lumen, in order to avoid otherwise toxic intermediates in the cytosol, and it depends on the proton gradient across the membrane, formed by V-ATPase. The VTC complex also plays a role in vacuolar membrane fusion. The protein is Vacuolar transporter chaperone complex subunit 4 (vtc4) of Schizosaccharomyces pombe (strain 972 / ATCC 24843) (Fission yeast).